The chain runs to 287 residues: NAD-dependent protein deacylase sir-2.2 (287 aa).

Positions 10–287 (AELCENSLKK…YKISDVLKEM (278 aa)) constitute a Deacetylase sirtuin-type domain. Residues 35-55 (GAGI…VGLY) and 116-119 (QNVD) each bind NAD(+). H134 functions as the Proton acceptor in the catalytic mechanism. 4 residues coordinate Zn(2+): C142, C145, C196, and C199. NAD(+) is bound by residues 236–238 (GTS), 262–264 (NIG), and I280.

It belongs to the sirtuin family. Class II subfamily. As to quaternary structure, interacts with pyc-1, pcca-1 and mccc-1. It depends on Zn(2+) as a cofactor. In terms of tissue distribution, ubiquitously expressed with high expression in the pharynx, body wall muscles and gonad.

The protein resides in the mitochondrion matrix. It is found in the mitochondrion. It catalyses the reaction N(6)-acetyl-L-lysyl-[protein] + NAD(+) + H2O = 2''-O-acetyl-ADP-D-ribose + nicotinamide + L-lysyl-[protein]. Functionally, NAD-dependent protein deacylase. Catalyzes the NAD-dependent hydrolysis of acyl groups from lysine residues. Plays a role in oxidative stress resistance. This chain is NAD-dependent protein deacylase sir-2.2 (sir-2.2), found in Caenorhabditis elegans.